The chain runs to 169 residues: Large ribosomal subunit protein bL17 (169 aa).

The disordered stretch occupies residues 124–169; the sequence is EKAVKRQDRSRRVKGSKKAIDEKTSDDSASVEAAPAAPEAEEKKDA. The segment covering 131–140 has biased composition (basic residues); it reads DRSRRVKGSK. Residues 150–161 are compositionally biased toward low complexity; sequence DSASVEAAPAAP.

It belongs to the bacterial ribosomal protein bL17 family. As to quaternary structure, part of the 50S ribosomal subunit. Contacts protein L32.

In Chloroherpeton thalassium (strain ATCC 35110 / GB-78), this protein is Large ribosomal subunit protein bL17.